We begin with the raw amino-acid sequence, 78 residues long: LYR motif-containing protein 9 (78 aa).

It belongs to the complex I LYR family. LYRM9 subfamily.

This Mus musculus (Mouse) protein is LYR motif-containing protein 9 (Lyrm9).